Reading from the N-terminus, the 32-residue chain is uncharacterized protein (32 aa).

This is an uncharacterized protein from Gallus gallus (Chicken).